A 210-amino-acid chain; its full sequence is uncharacterized protein (210 aa).

It localises to the mitochondrion. This is an uncharacterized protein from Schizosaccharomyces pombe (strain 972 / ATCC 24843) (Fission yeast).